The sequence spans 130 residues: Small ribosomal subunit protein uS9 (130 aa).

This sequence belongs to the universal ribosomal protein uS9 family.

This chain is Small ribosomal subunit protein uS9, found in Streptococcus thermophilus (strain CNRZ 1066).